The chain runs to 271 residues: Neurexophilin-1 (271 aa).

An N-terminal signal peptide occupies residues 1–21 (MQAACWYVLLLLQPTVYLVTC). Residues 22-97 (ANLTNGGKSE…WDWLRNSTDL (76 aa)) are II. N23, N68, N93, N146, N156, and N162 each carry an N-linked (GlcNAc...) asparagine glycan. The III stretch occupies residues 98–176 (QEPRPRAKRR…LVPPTKIVEF (79 aa)). Residues 177–185 (DLAQQTVID) are IV (linker domain). Positions 186 to 271 (AKDSKSFNCR…HSDTPYFPSG (86 aa)) are v (Cys-rich).

This sequence belongs to the neurexophilin family. In terms of processing, may be proteolytically processed at the boundary between the N-terminal non-conserved and the central conserved domain in neuron-like cells.

It localises to the secreted. May be signaling molecules that resemble neuropeptides. Ligand for alpha-neurexins. The sequence is that of Neurexophilin-1 (NXPH1) from Bos taurus (Bovine).